The chain runs to 176 residues: Superoxide oxidase CybB (176 aa).

The Cytoplasmic segment spans residues 1–7; that stretch reads MENKYSR. The chain crosses the membrane as a helical span at residues 8-29; it reads LQISIHWLVFLLVIAAYCAMEF. H13 provides a ligand contact to heme b. Over 30–39 the chain is Periplasmic; sequence RGFFPRSDRP. A helical transmembrane segment spans residues 40-64; it reads LINMIHVSCGISILVLMVVRLLLRL. Position 45 (H45) interacts with heme b. Over 65–77 the chain is Cytoplasmic; it reads KYPTPPIIPKPKP. The helical transmembrane segment at 78 to 103 threads the bilayer; the sequence is MMTGLAHLGHLVIYLLFIALPVIGLV. The Periplasmic portion of the chain corresponds to 104-135; sequence MMYNRGNPWFAFGLTMPYASEANFERVDSLKS. The chain crosses the membrane as a helical span at residues 136–158; that stretch reads WHETLANLGYFVIGLHAAAALAH. The heme b site is built by H137 and H151. At 159–176 the chain is on the cytoplasmic side; it reads HYFWKDNTLLRMMPRKRS.

Belongs to the cytochrome b561 family. As to quaternary structure, monomer. The cofactor is heme b.

It is found in the cell inner membrane. It carries out the reaction a ubiquinol + 2 O2 = 2 superoxide + a ubiquinone + 2 H(+). The enzyme catalyses a menaquinol + 2 O2 = 2 superoxide + a menaquinone + 2 H(+). Its activity is regulated as follows. Quinone binding to the enzyme accelerates the reaction with superoxide. In terms of biological role, B-type di-heme cytochrome. Catalyzes the oxidation of superoxide to molecular oxygen and transfers the extracted electrons to ubiquinone through the two hemes. Can also use menaquinone. The enzyme may be responsible for the detoxification of the superoxide anion produced in the membrane or at its surface. However, it can also efficiently catalyze the formation of superoxide from ubiquinol under physiological conditions. The sequence is that of Superoxide oxidase CybB from Escherichia coli (strain K12).